The following is a 640-amino-acid chain: DNA mismatch repair protein MutL (640 aa).

The interval 343-389 (TKNTATDQRAENLEVKPDSKEKELQPKESQHPRLVACDLPSGKIMPP) is disordered. Residues 350-373 (QRAENLEVKPDSKEKELQPKESQH) are compositionally biased toward basic and acidic residues.

The protein belongs to the DNA mismatch repair MutL/HexB family.

Its function is as follows. This protein is involved in the repair of mismatches in DNA. It is required for dam-dependent methyl-directed DNA mismatch repair. May act as a 'molecular matchmaker', a protein that promotes the formation of a stable complex between two or more DNA-binding proteins in an ATP-dependent manner without itself being part of a final effector complex. The sequence is that of DNA mismatch repair protein MutL from Desulforamulus reducens (strain ATCC BAA-1160 / DSM 100696 / MI-1) (Desulfotomaculum reducens).